Consider the following 640-residue polypeptide: Threonine--tRNA ligase (640 aa).

Residues 1-61 enclose the TGS domain; the sequence is MPIITLPNGD…TEDSTLQIIT (61 aa). The tract at residues 242-533 is catalytic; sequence DHRKIGKALD…LIEHYAGFMP (292 aa). Residues C333, H384, and H510 each contribute to the Zn(2+) site.

Belongs to the class-II aminoacyl-tRNA synthetase family. In terms of assembly, homodimer. It depends on Zn(2+) as a cofactor.

The protein localises to the cytoplasm. It catalyses the reaction tRNA(Thr) + L-threonine + ATP = L-threonyl-tRNA(Thr) + AMP + diphosphate + H(+). Functionally, catalyzes the attachment of threonine to tRNA(Thr) in a two-step reaction: L-threonine is first activated by ATP to form Thr-AMP and then transferred to the acceptor end of tRNA(Thr). Also edits incorrectly charged L-seryl-tRNA(Thr). This chain is Threonine--tRNA ligase, found in Acinetobacter baumannii (strain SDF).